Here is a 493-residue protein sequence, read N- to C-terminus: Cytochrome P450 2E1 (493 aa).

298–303 (FAGTET) is a substrate binding site. Cys-437 contacts heme.

Belongs to the cytochrome P450 family. Interacts with chaperones HSP70 and HSP90; this interaction is required for initial targeting to mitochondria. Requires heme as cofactor.

It localises to the endoplasmic reticulum membrane. The protein localises to the microsome membrane. It is found in the mitochondrion inner membrane. The enzyme catalyses an organic molecule + reduced [NADPH--hemoprotein reductase] + O2 = an alcohol + oxidized [NADPH--hemoprotein reductase] + H2O + H(+). The catalysed reaction is (5Z,8Z,11Z)-eicosatrienoate + reduced [NADPH--hemoprotein reductase] + O2 = 19-hydroxy-(5Z,8Z,11Z)-eicosatrienoate + oxidized [NADPH--hemoprotein reductase] + H2O + H(+). It carries out the reaction (5Z,8Z,11Z,14Z,17Z)-eicosapentaenoate + reduced [NADPH--hemoprotein reductase] + O2 = 19-hydroxy-(5Z,8Z,11Z,14Z,17Z)-eicosapentaenoate + oxidized [NADPH--hemoprotein reductase] + H2O + H(+). It catalyses the reaction (4Z,7Z,10Z,13Z,16Z,19Z)-docosahexaenoate + reduced [NADPH--hemoprotein reductase] + O2 = 21-hydroxy-(4Z,7Z,10Z,13Z,16Z,19Z)-docosahexaenoate + oxidized [NADPH--hemoprotein reductase] + H2O + H(+). The enzyme catalyses dodecanoate + reduced [NADPH--hemoprotein reductase] + O2 = 11-hydroxydodecanoate + oxidized [NADPH--hemoprotein reductase] + H2O + H(+). The catalysed reaction is tetradecanoate + reduced [NADPH--hemoprotein reductase] + O2 = 13-hydroxytetradecanoate + oxidized [NADPH--hemoprotein reductase] + H2O + H(+). It carries out the reaction 4-nitrophenol + NADPH + O2 + H(+) = 4-nitrocatechol + NADP(+) + H2O. Its pathway is lipid metabolism; fatty acid metabolism. The omega-1 hydroxylase activity is stimulated by cytochrome b5. A cytochrome P450 monooxygenase involved in the metabolism of fatty acids. Mechanistically, uses molecular oxygen inserting one oxygen atom into a substrate, and reducing the second into a water molecule, with two electrons provided by NADPH via cytochrome P450 reductase (NADPH--hemoprotein reductase). Catalyzes the hydroxylation of carbon-hydrogen bonds. Hydroxylates fatty acids specifically at the omega-1 position displaying the highest catalytic activity for saturated fatty acids. May be involved in the oxidative metabolism of xenobiotics. This is Cytochrome P450 2E1 (CYP2E1) from Oryctolagus cuniculus (Rabbit).